A 533-amino-acid chain; its full sequence is Probable RNA-binding protein 46 (533 aa).

RRM domains are found at residues 61–139 (CEVF…VSLD), 141–223 (CRLF…WADP), and 236–308 (KVLY…LAKP).

In terms of assembly, interacts with YTHDC2, MEIOC, MOV10, CNOT6L, DDX4, UPF1 and PABPC1.

Its subcellular location is the cytoplasm. In terms of biological role, essential for male and female fertility, playing a crucial role in regulating germ cell development by ensuring the proper progression of meiosis prophase I. Regulates mitotic-to-meiotic transition in spermatogenesis by forming a complex with MEIOC and YTHDC2 which recognizes and down-regulates mitotic transcripts for a successful meiotic entry. Required for normal synaptonemal complex formation during meiosis, binding meiotic cohesin subunit mRNAs containing GCCUAU/GUUCGA motifs in their 3'UTRs regions and positively regulating their translation. Required for spermatogonial differentiation in both developing and adult testis. This is Probable RNA-binding protein 46 (RBM46) from Homo sapiens (Human).